We begin with the raw amino-acid sequence, 523 residues long: Cytoplasmic dynein 1 light intermediate chain 1 (523 aa).

Residues 1-45 (MAAVGRVGSFGSSPPGLASTYASGPLANELASGSGGPAAGDDEDG) are disordered. 74 to 81 (GEDGAGKT) provides a ligand contact to ATP. Ser207 carries the post-translational modification Phosphoserine. Thr213 bears the Phosphothreonine mark. 2 disordered regions span residues 387-434 (PPTA…DPNM) and 457-523 (GSPG…GEAS). 2 positions are modified to phosphoserine: Ser398 and Ser405. Residue Thr408 is modified to Phosphothreonine. 4 positions are modified to phosphoserine: Ser412, Ser419, Ser421, and Ser427. The segment covering 412–421 (SVSSNVASVS) has biased composition (low complexity). Over residues 458–473 (SPGGPGVGGSPGGGAA) the composition is skewed to gly residues. Over residues 474–483 (GASTSLPPSA) the composition is skewed to low complexity. Residues Ser486 and Ser510 each carry the phosphoserine modification. Thr512 and Thr513 each carry phosphothreonine. Ser516 is subject to Phosphoserine.

This sequence belongs to the dynein light intermediate chain family. In terms of assembly, homodimer. The cytoplasmic dynein 1 complex consists of two catalytic heavy chains (HCs) and a number of non-catalytic subunits presented by intermediate chains (ICs), light intermediate chains (LICs) and light chains (LCs); the composition seems to vary in respect to the IC, LIC and LC composition. The heavy chain homodimer serves as a scaffold for the probable homodimeric assembly of the respective non-catalytic subunits. The ICs and LICs bind directly to the HC dimer and the LCs assemble on the IC dimer. Self-associates. Interacts with DYNC1H1; DYNC1LI1 and DYNC1LI2 bind mutually exclusive to DYNC1H1. Interacts with PCNT. Forms a complex with RAB11FIP3 and RAB11A1; the interaction between DYNC1LI1 and RAB11FIP3 is direct and induces DYNC1LI1 localization onto endosomal membrane; the complex regulates endocytic trafficking. Interacts with RUFY3. In terms of processing, phosphorylated during mitosis but not in interphase.

The protein resides in the cytoplasm. It is found in the chromosome. The protein localises to the centromere. Its subcellular location is the kinetochore. It localises to the cytoskeleton. The protein resides in the spindle pole. It is found in the recycling endosome membrane. Functionally, acts as one of several non-catalytic accessory components of the cytoplasmic dynein 1 complex that are thought to be involved in linking dynein to cargos and to adapter proteins that regulate dynein function. Cytoplasmic dynein 1 acts as a motor for the intracellular retrograde motility of vesicles and organelles along microtubules. May play a role in binding dynein to membranous organelles or chromosomes. Probably involved in the microtubule-dependent transport of pericentrin. Is required for progress through the spindle assembly checkpoint. The phosphorylated form appears to be involved in the selective removal of MAD1L1 and MAD1L2 but not BUB1B from kinetochores. Forms a functional Rab11/RAB11FIP3/dynein complex onto endosomal membrane that regulates the movement of peripheral sorting endosomes (SE) along microtubule tracks toward the microtubule organizing center/centrosome, generating the endosomal recycling compartment (ERC). The chain is Cytoplasmic dynein 1 light intermediate chain 1 (Dync1li1) from Rattus norvegicus (Rat).